The primary structure comprises 160 residues: SsrA-binding protein (160 aa).

The disordered stretch occupies residues 133–160 (KKLHDKRETEKERDWNRQKSRLLKGNSQ). The span at 137–149 (DKRETEKERDWNR) shows a compositional bias: basic and acidic residues.

The protein belongs to the SmpB family.

Its subcellular location is the cytoplasm. Required for rescue of stalled ribosomes mediated by trans-translation. Binds to transfer-messenger RNA (tmRNA), required for stable association of tmRNA with ribosomes. tmRNA and SmpB together mimic tRNA shape, replacing the anticodon stem-loop with SmpB. tmRNA is encoded by the ssrA gene; the 2 termini fold to resemble tRNA(Ala) and it encodes a 'tag peptide', a short internal open reading frame. During trans-translation Ala-aminoacylated tmRNA acts like a tRNA, entering the A-site of stalled ribosomes, displacing the stalled mRNA. The ribosome then switches to translate the ORF on the tmRNA; the nascent peptide is terminated with the 'tag peptide' encoded by the tmRNA and targeted for degradation. The ribosome is freed to recommence translation, which seems to be the essential function of trans-translation. The protein is SsrA-binding protein of Agrobacterium fabrum (strain C58 / ATCC 33970) (Agrobacterium tumefaciens (strain C58)).